The chain runs to 239 residues: Pyridoxine 5'-phosphate synthase (239 aa).

3-amino-2-oxopropyl phosphate is bound at residue Asn-7. Position 9 to 10 (9 to 10 (DH)) interacts with 1-deoxy-D-xylulose 5-phosphate. Arg-18 serves as a coordination point for 3-amino-2-oxopropyl phosphate. His-43 acts as the Proton acceptor in catalysis. The 1-deoxy-D-xylulose 5-phosphate site is built by Arg-45 and His-50. Residue Glu-70 is the Proton acceptor of the active site. Thr-100 serves as a coordination point for 1-deoxy-D-xylulose 5-phosphate. The active-site Proton donor is the His-191. 3-amino-2-oxopropyl phosphate contacts are provided by residues Gly-192 and 213-214 (GH).

Belongs to the PNP synthase family. Homooctamer; tetramer of dimers.

It localises to the cytoplasm. It carries out the reaction 3-amino-2-oxopropyl phosphate + 1-deoxy-D-xylulose 5-phosphate = pyridoxine 5'-phosphate + phosphate + 2 H2O + H(+). Its pathway is cofactor biosynthesis; pyridoxine 5'-phosphate biosynthesis; pyridoxine 5'-phosphate from D-erythrose 4-phosphate: step 5/5. Its function is as follows. Catalyzes the complicated ring closure reaction between the two acyclic compounds 1-deoxy-D-xylulose-5-phosphate (DXP) and 3-amino-2-oxopropyl phosphate (1-amino-acetone-3-phosphate or AAP) to form pyridoxine 5'-phosphate (PNP) and inorganic phosphate. This Gloeobacter violaceus (strain ATCC 29082 / PCC 7421) protein is Pyridoxine 5'-phosphate synthase.